The following is a 426-amino-acid chain: Eukaryotic translation initiation factor 3 subunit M (426 aa).

The PCI domain maps to 179-350; that stretch reads DDEDSYRYLI…KVFLVHRTTY (172 aa). Over residues 385–401 the composition is skewed to basic and acidic residues; the sequence is DVEGQREREQQELERKL. The segment at 385-426 is disordered; it reads DVEGQREREQQELERKLAGAGMGGGPGGDRRRQQKPRTDEDD.

The protein belongs to the eIF-3 subunit M family. As to quaternary structure, component of the eukaryotic translation initiation factor 3 (eIF-3) complex.

The protein resides in the cytoplasm. Its function is as follows. Component of the eukaryotic translation initiation factor 3 (eIF-3) complex, which is involved in protein synthesis of a specialized repertoire of mRNAs and, together with other initiation factors, stimulates binding of mRNA and methionyl-tRNAi to the 40S ribosome. The eIF-3 complex specifically targets and initiates translation of a subset of mRNAs involved in cell proliferation. This chain is Eukaryotic translation initiation factor 3 subunit M, found in Chaetomium globosum (strain ATCC 6205 / CBS 148.51 / DSM 1962 / NBRC 6347 / NRRL 1970) (Soil fungus).